Here is a 251-residue protein sequence, read N- to C-terminus: tRNA pseudouridine synthase A 1 (251 aa).

The Nucleophile role is filled by D52. Residue Y110 coordinates substrate.

It belongs to the tRNA pseudouridine synthase TruA family. Homodimer.

The enzyme catalyses uridine(38/39/40) in tRNA = pseudouridine(38/39/40) in tRNA. In terms of biological role, formation of pseudouridine at positions 38, 39 and 40 in the anticodon stem and loop of transfer RNAs. In Desulfotalea psychrophila (strain LSv54 / DSM 12343), this protein is tRNA pseudouridine synthase A 1.